We begin with the raw amino-acid sequence, 396 residues long: Metallophosphoesterase 1 (396 aa).

Residues T28–F48 form a helical membrane-spanning segment. Residues D75, D117, N155, H249, H303, and H305 each contribute to the a divalent metal cation site. A helical membrane pass occupies residues T356–F376.

Belongs to the metallophosphoesterase superfamily. MPPE1 family. Interacts with GPI-anchor proteins (via the GPI portion). Interacts with TMED10. It depends on Mn(2+) as a cofactor.

It is found in the endoplasmic reticulum-Golgi intermediate compartment membrane. Functionally, metallophosphoesterase that catalyzes the removal of a side-chain ethanolamine-phosphate (EtNP) from the second mannose of the GPI-anchor protein intermediate. Participates in the glycan remodeling steps of GPI-anchor maturation to allow an efficient transport of GPI-anchor proteins from the endoplasmic reticulum to the Golgi. The protein is Metallophosphoesterase 1 of Mus musculus (Mouse).